Consider the following 493-residue polypeptide: Ectonucleoside triphosphate diphosphohydrolase 8 (493 aa).

Residues 1 to 7 (MEYKGKV) are Cytoplasmic-facing. A helical membrane pass occupies residues 8–28 (VAGLLTATCVFSIIALILSAV). The Extracellular portion of the chain corresponds to 29–463 (DVKDVFLPPG…ALEHVKGHEP (435 aa)). Residues Asn-65, Asn-79, and Asn-133 are each glycosylated (N-linked (GlcNAc...) asparagine). Cysteines 76 and 100 form a disulfide. The Proton acceptor role is filled by Glu-166. N-linked (GlcNAc...) asparagine glycosylation is found at Asn-223, Asn-234, Asn-267, Asn-324, Asn-330, Asn-361, Asn-372, Asn-382, and Asn-445. Cysteines 244 and 291 form a disulfide. Residues Cys-327 and Cys-333 are joined by a disulfide bond. Cys-379 and Cys-401 are joined by a disulfide. Residues 464–486 (SLWAGAISFIVLAIVAGLVAILL) form a helical membrane-spanning segment. Topologically, residues 487 to 493 (QCFWKSK) are cytoplasmic.

This sequence belongs to the GDA1/CD39 NTPase family. Ca(2+) serves as cofactor. The cofactor is Mg(2+). In terms of processing, N-glycosylated.

Its subcellular location is the cell membrane. It carries out the reaction a ribonucleoside 5'-triphosphate + 2 H2O = a ribonucleoside 5'-phosphate + 2 phosphate + 2 H(+). Its function is as follows. Canalicular ectonucleoside NTPDase responsible for the main hepatic NTPDase activity. Ectonucleoside ATPases catalyze the hydrolysis of gamma- and beta-phosphate residues of nucleotides, playing a central role in concentration of extracellular nucleotides. The sequence is that of Ectonucleoside triphosphate diphosphohydrolase 8 (ENTPD8) from Gallus gallus (Chicken).